The following is a 171-amino-acid chain: Lipoprotein signal peptidase (171 aa).

Transmembrane regions (helical) follow at residues 7–27 (GLLA…GLYF), 64–84 (IGRW…GLWM), and 88–108 (TSRL…GNAI). Residues D118 and D136 contribute to the active site. A helical transmembrane segment spans residues 128–148 (SWYVFNVADAAIVAGVIGLIL).

The protein belongs to the peptidase A8 family.

The protein resides in the cell inner membrane. The catalysed reaction is Release of signal peptides from bacterial membrane prolipoproteins. Hydrolyzes -Xaa-Yaa-Zaa-|-(S,diacylglyceryl)Cys-, in which Xaa is hydrophobic (preferably Leu), and Yaa (Ala or Ser) and Zaa (Gly or Ala) have small, neutral side chains.. The protein operates within protein modification; lipoprotein biosynthesis (signal peptide cleavage). Functionally, this protein specifically catalyzes the removal of signal peptides from prolipoproteins. The polypeptide is Lipoprotein signal peptidase (Methylobacterium radiotolerans (strain ATCC 27329 / DSM 1819 / JCM 2831 / NBRC 15690 / NCIMB 10815 / 0-1)).